Reading from the N-terminus, the 203-residue chain is Orotate phosphoribosyltransferase (203 aa).

Residues R94, K98, H100, and 120–128 (EDLISTGGS) each bind 5-phospho-alpha-D-ribose 1-diphosphate. Position 124 (S124) interacts with orotate.

It belongs to the purine/pyrimidine phosphoribosyltransferase family. PyrE subfamily. As to quaternary structure, homodimer. It depends on Mg(2+) as a cofactor.

It catalyses the reaction orotidine 5'-phosphate + diphosphate = orotate + 5-phospho-alpha-D-ribose 1-diphosphate. Its pathway is pyrimidine metabolism; UMP biosynthesis via de novo pathway; UMP from orotate: step 1/2. In terms of biological role, catalyzes the transfer of a ribosyl phosphate group from 5-phosphoribose 1-diphosphate to orotate, leading to the formation of orotidine monophosphate (OMP). This Staphylococcus epidermidis (strain ATCC 35984 / DSM 28319 / BCRC 17069 / CCUG 31568 / BM 3577 / RP62A) protein is Orotate phosphoribosyltransferase.